Reading from the N-terminus, the 436-residue chain is Drebrin-like protein (436 aa).

The ADF-H domain maps to Ala2–Ala133. Phosphothreonine is present on Thr26. Position 160 is a phosphoserine (Ser160). Lys176 is modified (N6-acetyllysine). The stretch at Phe179–Ala233 forms a coiled coil. 2 stretches are compositionally biased toward basic and acidic residues: residues Lys185–Arg229 and His264–Ala275. The interval Lys185 to Glu341 is disordered. The segment covering Met276–Pro286 has biased composition (polar residues). Residues Ser277, Ser280, Ser283, and Ser291 each carry the phosphoserine modification. A compositionally biased stretch (polar residues) spans Leu294–Thr303. N6-acetyllysine is present on Lys296. Phosphothreonine is present on Thr299. Residues Tyr340 and Tyr350 each carry the phosphotyrosine modification. The region spanning Gly377–Glu436 is the SH3 domain.

This sequence belongs to the ABP1 family. Interacts with SHANK3, SYN1 and PRAM1. Interacts with SHANK2. Interacts with FGD1, DNM1 and MAP4K1. Interacts with ANKRD54. Interacts with COBL. Interacts with WASL and WIPF1. In terms of tissue distribution, detected in hippocampus neurons and in the Purkinje cell layer in cerebellum (at protein level). Predominantly expressed in brain, thymus and spleen. Also found in testis, heart and lung. Little or no expression detected in ovary or muscle.

It localises to the cytoplasm. It is found in the cytoskeleton. Its subcellular location is the cell projection. The protein resides in the lamellipodium. The protein localises to the ruffle. It localises to the cell cortex. It is found in the cytosol. Its subcellular location is the synapse. The protein resides in the perikaryon. The protein localises to the neuron projection. It localises to the cell membrane. It is found in the cytoplasmic vesicle. Its subcellular location is the clathrin-coated vesicle membrane. The protein resides in the golgi apparatus membrane. The protein localises to the podosome. It localises to the early endosome. It is found in the dendrite. Its subcellular location is the postsynaptic density. Its function is as follows. Adapter protein that binds F-actin and DNM1, and thereby plays a role in receptor-mediated endocytosis. Plays a role in the reorganization of the actin cytoskeleton, formation of cell projections, such as neurites, in neuron morphogenesis and synapse formation via its interaction with WASL and COBL. Does not bind G-actin and promote actin polymerization by itself. Required for the formation of organized podosome rosettes. May act as a common effector of antigen receptor-signaling pathways in leukocytes. Acts as a key component of the immunological synapse that regulates T-cell activation by bridging TCRs and the actin cytoskeleton to gene activation and endocytic processes. The protein is Drebrin-like protein of Mus musculus (Mouse).